Here is a 122-residue protein sequence, read N- to C-terminus: Large ribosomal subunit protein uL14 (122 aa).

Belongs to the universal ribosomal protein uL14 family. Part of the 50S ribosomal subunit. Forms a cluster with proteins L3 and L19. In the 70S ribosome, L14 and L19 interact and together make contacts with the 16S rRNA in bridges B5 and B8.

Functionally, binds to 23S rRNA. Forms part of two intersubunit bridges in the 70S ribosome. This chain is Large ribosomal subunit protein uL14, found in Anaeromyxobacter sp. (strain Fw109-5).